Here is a 197-residue protein sequence, read N- to C-terminus: Nucleoside triphosphate pyrophosphatase (197 aa).

D70 (proton acceptor) is an active-site residue.

It belongs to the Maf family. The cofactor is a divalent metal cation.

It is found in the cytoplasm. The enzyme catalyses a ribonucleoside 5'-triphosphate + H2O = a ribonucleoside 5'-phosphate + diphosphate + H(+). The catalysed reaction is a 2'-deoxyribonucleoside 5'-triphosphate + H2O = a 2'-deoxyribonucleoside 5'-phosphate + diphosphate + H(+). In terms of biological role, nucleoside triphosphate pyrophosphatase. May have a dual role in cell division arrest and in preventing the incorporation of modified nucleotides into cellular nucleic acids. This Shigella flexneri protein is Nucleoside triphosphate pyrophosphatase (yhdE).